The primary structure comprises 335 residues: MGRLILEHTLQGHKGRIWGVAWHPKGNVFASCGEDKAIRVWSLSGNTWSTKTILSDGHKRTIREIRWSPCGQYLASASFDATTAIWSKSSGEFECNATLEGHENEVKSVSWSRSGGLLATCSRDKSVWIWEVAGDDEFECAAVLNAHTQDVKRVVWHPTKDILASASYDNTIKMFAESQLDSDWDCTATLSSHTSTVWSIDFDAEGDRLVSCSDDKTLKIWRAYHPGNDAGIATPDKQSVWKCVCTLSGQHSRAIYDVSWCKLTGLIATGCGDDGIRIFKETSDSKRDEPTFEQLTAEETAHEQDVNAVEWNPAVAGQLISCSDDGTIKIWKVDD.

WD repeat units follow at residues 12–51, 57–96, 101–140, 146–185, 192–231, 250–289, and 301–335; these read GHKG…WSTK, GHKR…FECN, GHEN…EFEC, AHTQ…SDWD, SHTS…NDAG, QHSR…KRDE, and AHEQ…KVDD.

This sequence belongs to the WD repeat CIA1 family.

Its function is as follows. Essential component of the cytosolic iron-sulfur (Fe/S) protein assembly machinery. Required for the maturation of extramitochondrial Fe/S proteins. This is Probable cytosolic iron-sulfur protein assembly protein Ciao1 from Drosophila pseudoobscura pseudoobscura (Fruit fly).